Here is a 511-residue protein sequence, read N- to C-terminus: DELLA protein RGL1 (511 aa).

A compositionally biased stretch (basic and acidic residues) spans 1–11 (MKREHNHRESS). Residues 1–20 (MKREHNHRESSAGEGGSSSM) form a disordered region. Positions 32–36 (DELLV) match the DELLA motif motif. The short motif at 54-58 (LEQLE) is the LEXLE motif element. The VHYNP motif signature appears at 73 to 77 (VHYNP). In terms of domain architecture, GRAS spans 143–506 (LDSQETGVRL…RPLIATSAWR (364 aa)). The segment at 150-204 (VRLVHALLACAEAVQQNNLKLADALVKHVGLLASSQAGAMRKVATYFAEGLARRI) is leucine repeat I (LRI). A LxCxE motif motif is present at residues 157 to 161 (LACAE). The tract at residues 223 to 288 (QIHFYESCPY…NGPPDFRLTG (66 aa)) is VHIID. Residues 254-258 (VHVID) carry the VHIID motif. A leucine repeat II (LRII) region spans residues 298-330 (EVGWKLGQLASTIGVNFEFKSIALNNLSDLKPE). A PFYRE region spans residues 341-427 (VAVNSVFELH…ELFLGRQILN (87 aa)). Positions 349-353 (LHRLL) match the LXXLL motif motif. The tract at residues 430–506 (ACEGEDRVER…RPLIATSAWR (77 aa)) is SAW.

Belongs to the GRAS family. DELLA subfamily. As to quaternary structure, interacts directly with the GID2/SLY1 component of the SCF(GID2) complex. Interacts (via N-terminus) with GID1A, GID1B and GID1B (via N-terminus). Interacts with the BOI proteins BOI, BRG1, BRG2 and BRG3. Binds to and coactivates GAF1/IDD2 and ENY/IDD1. Phosphorylated. In terms of processing, may be ubiquitinated, as suggested by its interaction with GID2. Ubiquitination is however unsure since in contrast to other DELLA proteins, it is not ubiquitinated and degraded upon GA application. Nevertheless, ubiquitination may be triggered by other processes. As to expression, predominantly expressed in germinating seeds and flowers and siliques. Highly expressed in inflorescences and weakly or not expressed in rosette leaves, etiolated seedlings, siliques, mature stems and roots. RGA and GAI transcripts were detected at slightly varying levels in all tissues examined. RGL2 signal was undetected, and RGL3 signal was very weak in all tissues examined (rosette leaves, seedlings, inflorescences, and siliques) except inflorescences. In the flower, it is expressed in developing ovules as well as in developing anthers throughout microspore development.

It localises to the nucleus. Functionally, probable transcriptional regulator that acts as a repressor of the gibberellin (GA) signaling pathway. No effect of the BOI proteins on its stability. Probably acts by participating in large multiprotein complexes that repress transcription of GA-inducible genes. Has overlapping but distinct roles in GA signaling compared to RGA and GAI. Regulates the floral development. May also participate in seed germination and in ovule and anther development. Its activity is probably regulated by other phytohormones such as auxin and ethylene. This chain is DELLA protein RGL1 (RGL1), found in Arabidopsis thaliana (Mouse-ear cress).